The chain runs to 174 residues: Crossover junction endodeoxyribonuclease RuvC (174 aa).

Active-site residues include aspartate 8, glutamate 68, and aspartate 140. Mg(2+) is bound by residues aspartate 8, glutamate 68, and aspartate 140.

The protein belongs to the RuvC family. Homodimer which binds Holliday junction (HJ) DNA. The HJ becomes 2-fold symmetrical on binding to RuvC with unstacked arms; it has a different conformation from HJ DNA in complex with RuvA. In the full resolvosome a probable DNA-RuvA(4)-RuvB(12)-RuvC(2) complex forms which resolves the HJ. Mg(2+) is required as a cofactor.

Its subcellular location is the cytoplasm. It catalyses the reaction Endonucleolytic cleavage at a junction such as a reciprocal single-stranded crossover between two homologous DNA duplexes (Holliday junction).. Functionally, the RuvA-RuvB-RuvC complex processes Holliday junction (HJ) DNA during genetic recombination and DNA repair. Endonuclease that resolves HJ intermediates. Cleaves cruciform DNA by making single-stranded nicks across the HJ at symmetrical positions within the homologous arms, yielding a 5'-phosphate and a 3'-hydroxyl group; requires a central core of homology in the junction. The consensus cleavage sequence is 5'-(A/T)TT(C/G)-3'. Cleavage occurs on the 3'-side of the TT dinucleotide at the point of strand exchange. HJ branch migration catalyzed by RuvA-RuvB allows RuvC to scan DNA until it finds its consensus sequence, where it cleaves and resolves the cruciform DNA. This is Crossover junction endodeoxyribonuclease RuvC from Legionella pneumophila subsp. pneumophila (strain Philadelphia 1 / ATCC 33152 / DSM 7513).